We begin with the raw amino-acid sequence, 421 residues long: Serine--tRNA ligase (421 aa).

Residue 229–231 (TSE) participates in L-serine binding. 260–262 (RRE) contacts ATP. Glutamate 283 lines the L-serine pocket. 347–350 (EISS) contacts ATP. Serine 381 contributes to the L-serine binding site.

This sequence belongs to the class-II aminoacyl-tRNA synthetase family. Type-1 seryl-tRNA synthetase subfamily. Homodimer. The tRNA molecule binds across the dimer.

Its subcellular location is the cytoplasm. The enzyme catalyses tRNA(Ser) + L-serine + ATP = L-seryl-tRNA(Ser) + AMP + diphosphate + H(+). It carries out the reaction tRNA(Sec) + L-serine + ATP = L-seryl-tRNA(Sec) + AMP + diphosphate + H(+). It functions in the pathway aminoacyl-tRNA biosynthesis; selenocysteinyl-tRNA(Sec) biosynthesis; L-seryl-tRNA(Sec) from L-serine and tRNA(Sec): step 1/1. Catalyzes the attachment of serine to tRNA(Ser). Is also able to aminoacylate tRNA(Sec) with serine, to form the misacylated tRNA L-seryl-tRNA(Sec), which will be further converted into selenocysteinyl-tRNA(Sec). In Fusobacterium nucleatum subsp. nucleatum (strain ATCC 25586 / DSM 15643 / BCRC 10681 / CIP 101130 / JCM 8532 / KCTC 2640 / LMG 13131 / VPI 4355), this protein is Serine--tRNA ligase.